A 102-amino-acid polypeptide reads, in one-letter code: NADH-quinone oxidoreductase subunit K (102 aa).

A run of 3 helical transmembrane segments spans residues 6-26 (LEHG…GVMV), 30-50 (LLFM…AFVL), and 62-82 (VMFI…LAIV).

It belongs to the complex I subunit 4L family. As to quaternary structure, NDH-1 is composed of 14 different subunits. Subunits NuoA, H, J, K, L, M, N constitute the membrane sector of the complex.

The protein localises to the cell inner membrane. It catalyses the reaction a quinone + NADH + 5 H(+)(in) = a quinol + NAD(+) + 4 H(+)(out). In terms of biological role, NDH-1 shuttles electrons from NADH, via FMN and iron-sulfur (Fe-S) centers, to quinones in the respiratory chain. The immediate electron acceptor for the enzyme in this species is believed to be ubiquinone. Couples the redox reaction to proton translocation (for every two electrons transferred, four hydrogen ions are translocated across the cytoplasmic membrane), and thus conserves the redox energy in a proton gradient. This chain is NADH-quinone oxidoreductase subunit K, found in Acinetobacter baumannii (strain AB307-0294).